The sequence spans 341 residues: Methionine import ATP-binding protein MetN (341 aa).

One can recognise an ABC transporter domain in the interval 9–247 (ISVQKVNKEI…PRSSITEELF (239 aa)). 41 to 48 (GHSGSGKS) provides a ligand contact to ATP.

Belongs to the ABC transporter superfamily. Methionine importer (TC 3.A.1.24) family. The complex is composed of two ATP-binding proteins (MetN), two transmembrane proteins (MetI) and a solute-binding protein (MetQ).

It is found in the cell inner membrane. It carries out the reaction L-methionine(out) + ATP + H2O = L-methionine(in) + ADP + phosphate + H(+). The catalysed reaction is D-methionine(out) + ATP + H2O = D-methionine(in) + ADP + phosphate + H(+). Functionally, part of the ABC transporter complex MetNIQ involved in methionine import. Responsible for energy coupling to the transport system. This Chlamydia caviae (strain ATCC VR-813 / DSM 19441 / 03DC25 / GPIC) (Chlamydophila caviae) protein is Methionine import ATP-binding protein MetN.